The chain runs to 131 residues: Large-conductance mechanosensitive channel (131 aa).

2 helical membrane passes run 14-34 (VIDL…VTSL) and 67-87 (GSFI…FIFI).

Belongs to the MscL family. In terms of assembly, homopentamer.

It localises to the cell membrane. Its function is as follows. Channel that opens in response to stretch forces in the membrane lipid bilayer. May participate in the regulation of osmotic pressure changes within the cell. This Bacillus pumilus (strain SAFR-032) protein is Large-conductance mechanosensitive channel.